The chain runs to 268 residues: Tryptophan synthase alpha chain (268 aa).

Catalysis depends on proton acceptor residues Glu49 and Asp60.

The protein belongs to the TrpA family. Tetramer of two alpha and two beta chains.

It catalyses the reaction (1S,2R)-1-C-(indol-3-yl)glycerol 3-phosphate + L-serine = D-glyceraldehyde 3-phosphate + L-tryptophan + H2O. The protein operates within amino-acid biosynthesis; L-tryptophan biosynthesis; L-tryptophan from chorismate: step 5/5. Its function is as follows. The alpha subunit is responsible for the aldol cleavage of indoleglycerol phosphate to indole and glyceraldehyde 3-phosphate. The protein is Tryptophan synthase alpha chain of Vibrio metschnikovii.